Reading from the N-terminus, the 78-residue chain is Omega-conotoxin-like ArMKLT1-011 (78 aa).

The first 22 residues, 1-22 (MKLTCMMIVAVLFLTAWTSVTA), serve as a signal peptide directing secretion. Residues 23–48 (VNTRGELENLFLRASHEMNSEASKLD) constitute a propeptide that is removed on maturation. 3 disulfide bridges follow: Cys52-Cys69, Cys59-Cys73, and Cys68-Cys77.

The protein belongs to the conotoxin O1 superfamily. As to expression, expressed by the venom duct.

It is found in the secreted. Omega-conotoxins act at presynaptic membranes, they bind and block voltage-gated calcium channels (Cav). This is Omega-conotoxin-like ArMKLT1-011 from Conus arenatus (Sand-dusted cone).